The following is a 24-amino-acid chain: Fraternine (24 aa).

An intrachain disulfide couples Cys11 to Cys24. Cys24 is subject to Cysteine amide.

As to expression, expressed by the venom gland.

The protein localises to the secreted. In terms of biological role, wasp venom peptide that acts as a potent mast cell degranulating peptide without hemolytic activity. Shows neuroprotective effect, since it prevents the death of dopaminergic neurons of the brain substantia nigra region and recovers motor deficit in a 6-hydroxydopamine (6-OHDA)-induced murine model of Parkinson disease. This Parachartergus fraternus (Artistic wasp) protein is Fraternine.